The chain runs to 374 residues: Guanine nucleotide-binding protein subunit alpha-15 (374 aa).

The G-alpha domain occupies 41–374 (GELKLLLLGT…ARYLDEINLL (334 aa)). The segment at 44-57 (KLLLLGTGESGKST) is G1 motif. Residues 49-56 (GTGESGKS), 183-189 (LRSRMPT), 208-212 (DVGGQ), 277-280 (NKTD), and A346 each bind GTP. Positions 56 and 189 each coordinate Mg(2+). The G2 motif stretch occupies residues 181–189 (DVLRSRMPT). A G3 motif region spans residues 204–213 (LRIVDVGGQK). Positions 273-280 (ILFLNKTD) are G4 motif. The tract at residues 344–349 (TCATDT) is G5 motif.

It belongs to the G-alpha family. G(q) subfamily. In terms of assembly, g proteins are composed of 3 units; alpha, beta and gamma. The alpha chain contains the guanine nucleotide binding site.

In terms of biological role, guanine nucleotide-binding proteins (G proteins) are involved as modulators or transducers in various transmembrane signaling systems. The protein is Guanine nucleotide-binding protein subunit alpha-15 (GNA15) of Oryctolagus cuniculus (Rabbit).